Consider the following 382-residue polypeptide: uncharacterized protein (382 aa).

Helical transmembrane passes span 14 to 34, 45 to 65, 79 to 99, 102 to 122, 131 to 151, 157 to 177, 204 to 224, 236 to 256, 265 to 285, 289 to 309, 325 to 345, and 349 to 369; these read GLLL…LWLA, MVSS…GYLI, LVFA…SWMA, FVAG…LMCS, LLAA…LLVS, LMNV…PLLF, LGVN…GLMP, NIGF…WPIG, LLVL…MLTH, APAL…AMAW, ALLL…AMLM, and SDNL…LMLL.

It belongs to the major facilitator superfamily. YcaD (TC 2.A.1.26) family.

The protein resides in the cell inner membrane. This is an uncharacterized protein from Escherichia fergusonii (strain ATCC 35469 / DSM 13698 / CCUG 18766 / IAM 14443 / JCM 21226 / LMG 7866 / NBRC 102419 / NCTC 12128 / CDC 0568-73).